The chain runs to 289 residues: Phosphatidylglycerol--prolipoprotein diacylglyceryl transferase (289 aa).

Helical transmembrane passes span 24–44, 70–90, and 111–131; these read GIAIRWYGTMYIVAFAIVYLL, GGVLIGGRIGYILFYGFDWFL, and GINGMSFHGGLIGVAIALWLF. R158 lines the a 1,2-diacyl-sn-glycero-3-phospho-(1'-sn-glycerol) pocket. 2 helical membrane passes run 219-239 and 253-273; these read GYLSGLYLIGYGTVRFFIEFF and FSMGQVLCFLMIAAGIGILVW.

The protein belongs to the Lgt family.

It localises to the cell inner membrane. It carries out the reaction L-cysteinyl-[prolipoprotein] + a 1,2-diacyl-sn-glycero-3-phospho-(1'-sn-glycerol) = an S-1,2-diacyl-sn-glyceryl-L-cysteinyl-[prolipoprotein] + sn-glycerol 1-phosphate + H(+). Its pathway is protein modification; lipoprotein biosynthesis (diacylglyceryl transfer). Catalyzes the transfer of the diacylglyceryl group from phosphatidylglycerol to the sulfhydryl group of the N-terminal cysteine of a prolipoprotein, the first step in the formation of mature lipoproteins. This Chlorobaculum tepidum (strain ATCC 49652 / DSM 12025 / NBRC 103806 / TLS) (Chlorobium tepidum) protein is Phosphatidylglycerol--prolipoprotein diacylglyceryl transferase.